Reading from the N-terminus, the 199-residue chain is Urease accessory protein UreG (199 aa).

8 to 15 (GPVGSGKT) contacts GTP.

The protein belongs to the SIMIBI class G3E GTPase family. UreG subfamily. Homodimer. UreH, UreF and UreG form a complex that acts as a GTP-hydrolysis-dependent molecular chaperone, activating the urease apoprotein by helping to assemble the nickel containing metallocenter of UreC. The UreE protein probably delivers the nickel.

It is found in the cytoplasm. Facilitates the functional incorporation of the urease nickel metallocenter. This process requires GTP hydrolysis, probably effectuated by UreG. This chain is Urease accessory protein UreG, found in Helicobacter pylori (strain P12).